Here is a 285-residue protein sequence, read N- to C-terminus: Small ribosomal subunit protein uS2 (285 aa).

A disordered region spans residues 262-285 (NDDWNEDDTAPAAPGAASWGGAAF). A compositionally biased stretch (low complexity) spans 271–285 (APAAPGAASWGGAAF).

It belongs to the universal ribosomal protein uS2 family. As to quaternary structure, component of the small ribosomal subunit. Mature ribosomes consist of a small (40S) and a large (60S) subunit. The 40S subunit contains about 33 different proteins and 1 molecule of RNA (18S). The 60S subunit contains about 49 different proteins and 3 molecules of RNA (28S, 5.8S and 5S). Interacts with ribosomal protein S21.

It localises to the cytoplasm. Its function is as follows. Required for the assembly and/or stability of the 40S ribosomal subunit. Required for the processing of the 20S rRNA-precursor to mature 18S rRNA in a late step of the maturation of 40S ribosomal subunits. This chain is Small ribosomal subunit protein uS2, found in Anopheles gambiae (African malaria mosquito).